A 447-amino-acid polypeptide reads, in one-letter code: Ribosomal protein uS12 methylthiotransferase RimO (447 aa).

Residues 4–114 (PKVGFVSLGC…VMEAVHEYVP (111 aa)) form the MTTase N-terminal domain. The [4Fe-4S] cluster site is built by cysteine 13, cysteine 49, cysteine 78, cysteine 147, cysteine 151, and cysteine 154. In terms of domain architecture, Radical SAM core spans 133–370 (LTPKHYAYLK…MQVQQQISAA (238 aa)). The 71-residue stretch at 373 to 443 (QKRIGQTMTV…EYDLFAKLIK (71 aa)) folds into the TRAM domain.

It belongs to the methylthiotransferase family. RimO subfamily. The cofactor is [4Fe-4S] cluster.

The protein localises to the cytoplasm. It catalyses the reaction L-aspartate(89)-[ribosomal protein uS12]-hydrogen + (sulfur carrier)-SH + AH2 + 2 S-adenosyl-L-methionine = 3-methylsulfanyl-L-aspartate(89)-[ribosomal protein uS12]-hydrogen + (sulfur carrier)-H + 5'-deoxyadenosine + L-methionine + A + S-adenosyl-L-homocysteine + 2 H(+). Its function is as follows. Catalyzes the methylthiolation of an aspartic acid residue of ribosomal protein uS12. This chain is Ribosomal protein uS12 methylthiotransferase RimO, found in Acinetobacter baumannii (strain SDF).